The chain runs to 997 residues: Phosphoenolpyruvate carboxylase (997 aa).

Residues 1–67 form a disordered region; it reads MKSSGSARTA…KPAARTREDK (67 aa). Active-site residues include His-207 and Lys-649.

Belongs to the PEPCase type 1 family. The cofactor is Mg(2+).

It carries out the reaction oxaloacetate + phosphate = phosphoenolpyruvate + hydrogencarbonate. Its function is as follows. Forms oxaloacetate, a four-carbon dicarboxylic acid source for the tricarboxylic acid cycle. This is Phosphoenolpyruvate carboxylase from Burkholderia vietnamiensis (strain G4 / LMG 22486) (Burkholderia cepacia (strain R1808)).